A 407-amino-acid polypeptide reads, in one-letter code: UPF0761 membrane protein AZOSEA40600 (407 aa).

Helical transmembrane passes span 29–49, 92–112, 132–152, 174–194, 207–227, and 239–259; these read SLAF…IALF, GLTL…LMTI, LMVH…SVLA, FARL…YYAV, GGIA…LFIV, and FAVL…ILLG.

The protein belongs to the UPF0761 family.

The protein resides in the cell inner membrane. This Aromatoleum aromaticum (strain DSM 19018 / LMG 30748 / EbN1) (Azoarcus sp. (strain EbN1)) protein is UPF0761 membrane protein AZOSEA40600.